Consider the following 159-residue polypeptide: MKSIFLVFFAVCLVKAEAGKGRKREPNIINPPCRECYVQDSSGNCVYDKWGCGGARKREPNIINPPCRECYVQDSSGNCVYDKWGCGGARKREPNIINPPCRECYVQDSSGNCVYDKWGCGGARKREPNIINPPCRECYVQDSSGNCVYHKWGCGGARK.

The signal sequence occupies residues 1-18 (MKSIFLVFFAVCLVKAEA). The propeptide occupies 19-26 (GKGRKREP). 2 cysteine pairs are disulfide-bonded: Cys-33–Cys-45 and Cys-36–Cys-52. Residues 59–60 (EP) constitute a propeptide that is removed on maturation. Disulfide bonds link Cys-67–Cys-79 and Cys-70–Cys-86. Positions 93 to 94 (EP) are excised as a propeptide. Cystine bridges form between Cys-101/Cys-113 and Cys-104/Cys-120. The propeptide occupies 127–128 (EP). Disulfide bonds link Cys-135–Cys-147 and Cys-138–Cys-154.

Belongs to the sea anemone BBH family.

Its subcellular location is the secreted. It is found in the nematocyst. In terms of biological role, inhibits ion channels. In Anemonia viridis (Snakelocks anemone), this protein is U-actitoxin-Avd13a/b.